A 77-amino-acid polypeptide reads, in one-letter code: Translation initiation factor IF-1, chloroplastic (77 aa).

An S1-like domain is found at 1–71 (MKEQKWIHEG…TRGRIIYRLR (71 aa)).

Belongs to the IF-1 family. In terms of assembly, component of the 30S ribosomal translation pre-initiation complex which assembles on the 30S ribosome in the order IF-2 and IF-3, IF-1 and N-formylmethionyl-tRNA(fMet); mRNA recruitment can occur at any time during PIC assembly.

Its subcellular location is the plastid. The protein localises to the chloroplast. In terms of biological role, one of the essential components for the initiation of protein synthesis. Stabilizes the binding of IF-2 and IF-3 on the 30S subunit to which N-formylmethionyl-tRNA(fMet) subsequently binds. Helps modulate mRNA selection, yielding the 30S pre-initiation complex (PIC). Upon addition of the 50S ribosomal subunit IF-1, IF-2 and IF-3 are released leaving the mature 70S translation initiation complex. The polypeptide is Translation initiation factor IF-1, chloroplastic (Montinia caryophyllacea (Wild clove bush)).